A 620-amino-acid chain; its full sequence is Carotenoid isomerooxygenase (620 aa).

H211, H267, and H337 together coordinate Fe cation. Positions 440–459 (NGKQATAGEESPKRDAKRGR) are disordered. Residues 449–459 (ESPKRDAKRGR) are compositionally biased toward basic and acidic residues. Residue H612 participates in Fe cation binding.

This sequence belongs to the carotenoid oxygenase family. Fe(2+) is required as a cofactor. As to expression, expression follows organogenesis of the larval Bolwig's organ (BO), which mediates larval photophobic behavior. In the adult, expression is restricted exclusively to the brain. Expressed in both neuronal cells and glia cells. Not active within photoreceptors. Active within neuronal cells within the central nervous system.

The catalysed reaction is all-trans-zeaxanthin + O2 = (3R)-11-cis-3-hydroxyretinal + (3R)-all-trans-3-hydroxyretinal. Its pathway is cofactor metabolism; retinol metabolism. Catalyzes the oxidative cleavage at the 15,15'-double bond of carotenoids and the simultaneous all-trans to 11-cis isomerization of one cleavage product. Carotenoids like 11-cis retinal can promote visual pigment biogenesis in the dark. Essential for the biosynthesis of the 3-hydroxyretinal chromophore of rhodopsin from zeaxanthin and for proper photoreceptor development. Also essential for larval light perception. The polypeptide is Carotenoid isomerooxygenase (ninaB) (Drosophila melanogaster (Fruit fly)).